A 201-amino-acid chain; its full sequence is Transgelin (201 aa).

N-acetylalanine is present on A2. The Calponin-homology (CH) domain occupies 24–137; it reads EELEERLVEW…RTLMALGSLA (114 aa). S166 carries the phosphoserine modification. K172 carries the N6-acetyllysine modification. The Calponin-like repeat unit spans residues 175 to 200; the sequence is IGLQMGSNRGASQAGMTGYGRPRQII. Position 181 is a phosphoserine (S181). Residue R183 is modified to Omega-N-methylarginine.

The protein belongs to the calponin family.

It is found in the cytoplasm. Its function is as follows. Actin cross-linking/gelling protein. Involved in calcium interactions and contractile properties of the cell that may contribute to replicative senescence. The chain is Transgelin (TAGLN) from Homo sapiens (Human).